The chain runs to 160 residues: Transcription antitermination protein NusB (160 aa).

Belongs to the NusB family.

Its function is as follows. Involved in transcription antitermination. Required for transcription of ribosomal RNA (rRNA) genes. Binds specifically to the boxA antiterminator sequence of the ribosomal RNA (rrn) operons. The chain is Transcription antitermination protein NusB from Rhizobium etli (strain ATCC 51251 / DSM 11541 / JCM 21823 / NBRC 15573 / CFN 42).